Consider the following 553-residue polypeptide: HTH-type transcriptional regulator SgrR (553 aa).

Residues 1 to 113 (MSTSRLQQQF…RQMLLSQLGR (113 aa)) enclose the HTH marR-type domain. Residues 26-49 (LQALAEVLNCSRRHVRSLLGKMQH) constitute a DNA-binding region (H-T-H motif). The solute-binding stretch occupies residues 163–494 (ELEPDLSHHW…EELHQDIESW (332 aa)).

Functionally, activates the small RNA gene sgrS under glucose-phosphate stress conditions as well as yfdZ. Represses its own transcription under both stress and non-stress conditions. Might act as a sensor of the intracellular accumulation of phosphoglucose by binding these molecules in its C-terminal solute-binding domain. This is HTH-type transcriptional regulator SgrR from Yersinia pseudotuberculosis serotype I (strain IP32953).